We begin with the raw amino-acid sequence, 286 residues long: Structure-specific endonuclease subunit SLX1 (286 aa).

Residues 15–98 enclose the GIY-YIG domain; that stretch reads SFYGVYILKS…QHAYQTRHIN (84 aa).

It belongs to the SLX1 family. As to quaternary structure, forms a heterodimer with SLX4. Requires a divalent metal cation as cofactor.

It is found in the nucleus. Its function is as follows. Catalytic subunit of the SLX1-SLX4 structure-specific endonuclease that resolves DNA secondary structures generated during DNA repair and recombination. Has endonuclease activity towards branched DNA substrates, introducing single-strand cuts in duplex DNA close to junctions with ss-DNA. This is Structure-specific endonuclease subunit SLX1 from Candida dubliniensis (strain CD36 / ATCC MYA-646 / CBS 7987 / NCPF 3949 / NRRL Y-17841) (Yeast).